Reading from the N-terminus, the 309-residue chain is Homoserine O-succinyltransferase (309 aa).

Catalysis depends on Cys-142, which acts as the Acyl-thioester intermediate. Substrate-binding residues include Lys-163 and Ser-192. The active-site Proton acceptor is His-235. Residue Glu-237 is part of the active site. Residue Arg-249 participates in substrate binding.

Belongs to the MetA family. In terms of assembly, homodimer.

It localises to the cytoplasm. It catalyses the reaction L-homoserine + succinyl-CoA = O-succinyl-L-homoserine + CoA. Its pathway is amino-acid biosynthesis; L-methionine biosynthesis via de novo pathway; O-succinyl-L-homoserine from L-homoserine: step 1/1. In terms of biological role, transfers a succinyl group from succinyl-CoA to L-homoserine, forming succinyl-L-homoserine. This chain is Homoserine O-succinyltransferase, found in Salmonella choleraesuis (strain SC-B67).